We begin with the raw amino-acid sequence, 239 residues long: Methylthioribulose-1-phosphate dehydratase (239 aa).

Residue Cys-94 coordinates substrate. Positions 112 and 114 each coordinate Zn(2+). Residue Glu-136 is the Proton donor/acceptor of the active site. Residue His-192 participates in Zn(2+) binding.

It belongs to the aldolase class II family. MtnB subfamily. It depends on Zn(2+) as a cofactor.

Its subcellular location is the cytoplasm. It carries out the reaction 5-(methylsulfanyl)-D-ribulose 1-phosphate = 5-methylsulfanyl-2,3-dioxopentyl phosphate + H2O. The protein operates within amino-acid biosynthesis; L-methionine biosynthesis via salvage pathway; L-methionine from S-methyl-5-thio-alpha-D-ribose 1-phosphate: step 2/6. In terms of biological role, catalyzes the dehydration of methylthioribulose-1-phosphate (MTRu-1-P) into 2,3-diketo-5-methylthiopentyl-1-phosphate (DK-MTP-1-P). Functions in the methionine salvage pathway. May play a role in apoptosis. In Xenopus laevis (African clawed frog), this protein is Methylthioribulose-1-phosphate dehydratase.